We begin with the raw amino-acid sequence, 272 residues long: Cyclase-like protein 2 (272 aa).

An N-terminal signal peptide occupies residues 1–24; sequence MAVPPLFFLLTLLSLPSLLISAGA.

Belongs to the Cyclase 1 superfamily.

It is found in the secreted. The protein resides in the extracellular space. Its subcellular location is the extracellular matrix. Its function is as follows. May function redundantly with CYCLASE1 for normal plant growth, development and viability. The chain is Cyclase-like protein 2 from Arabidopsis thaliana (Mouse-ear cress).